A 128-amino-acid polypeptide reads, in one-letter code: Large ribosomal subunit protein bL12c (128 aa).

The protein belongs to the bacterial ribosomal protein bL12 family. Homodimer. Part of the ribosomal stalk of the 50S ribosomal subunit. Forms a multimeric L10(L12)X complex, where L10 forms an elongated spine to which 2 to 4 L12 dimers bind in a sequential fashion. Binds GTP-bound translation factors.

It localises to the plastid. It is found in the chloroplast. In terms of biological role, forms part of the ribosomal stalk which helps the ribosome interact with GTP-bound translation factors. Is thus essential for accurate translation. The chain is Large ribosomal subunit protein bL12c from Phaeodactylum tricornutum (strain CCAP 1055/1).